Here is a 476-residue protein sequence, read N- to C-terminus: Aspartyl/glutamyl-tRNA(Asn/Gln) amidotransferase subunit B (476 aa).

The protein belongs to the GatB/GatE family. GatB subfamily. As to quaternary structure, heterotrimer of A, B and C subunits.

It carries out the reaction L-glutamyl-tRNA(Gln) + L-glutamine + ATP + H2O = L-glutaminyl-tRNA(Gln) + L-glutamate + ADP + phosphate + H(+). It catalyses the reaction L-aspartyl-tRNA(Asn) + L-glutamine + ATP + H2O = L-asparaginyl-tRNA(Asn) + L-glutamate + ADP + phosphate + 2 H(+). Functionally, allows the formation of correctly charged Asn-tRNA(Asn) or Gln-tRNA(Gln) through the transamidation of misacylated Asp-tRNA(Asn) or Glu-tRNA(Gln) in organisms which lack either or both of asparaginyl-tRNA or glutaminyl-tRNA synthetases. The reaction takes place in the presence of glutamine and ATP through an activated phospho-Asp-tRNA(Asn) or phospho-Glu-tRNA(Gln). The chain is Aspartyl/glutamyl-tRNA(Asn/Gln) amidotransferase subunit B from Bacillus velezensis (strain DSM 23117 / BGSC 10A6 / LMG 26770 / FZB42) (Bacillus amyloliquefaciens subsp. plantarum).